The primary structure comprises 784 residues: LPS-assembly protein LptD (784 aa).

The signal sequence occupies residues 1 to 24 (MKKRIPTLLATMIATALYSQQGLA). Disulfide bonds link Cys31–Cys724 and Cys173–Cys725.

This sequence belongs to the LptD family. In terms of assembly, component of the lipopolysaccharide transport and assembly complex. Interacts with LptE and LptA. May interact with LptE during assembly of LptD by the beta-barrel assembly machine (BAM). Also interacts with LptM, which promotes the efficient assembly of the LptDE translocon by the BAM complex. Post-translationally, contains two intramolecular disulfide bonds. At least one disulfide bond is required for activity, and protein is probably fully oxidized in vivo.

The protein resides in the cell outer membrane. Its function is as follows. Together with LptE, is involved in the assembly of lipopolysaccharide (LPS) at the surface of the outer membrane. Contributes to n-hexane resistance. The chain is LPS-assembly protein LptD from Escherichia coli (strain K12).